The chain runs to 284 residues: Tryptophan 2,3-dioxygenase (284 aa).

Substrate-binding positions include 53–57 (FIIQH) and arginine 119. Histidine 242 is a binding site for heme. Threonine 256 provides a ligand contact to substrate.

It belongs to the tryptophan 2,3-dioxygenase family. As to quaternary structure, homotetramer. It depends on heme as a cofactor.

It carries out the reaction L-tryptophan + O2 = N-formyl-L-kynurenine. It functions in the pathway amino-acid degradation; L-tryptophan degradation via kynurenine pathway; L-kynurenine from L-tryptophan: step 1/2. It participates in siderophore biosynthesis; quinolobactin biosynthesis. Its function is as follows. Heme-dependent dioxygenase that catalyzes the oxidative cleavage of the L-tryptophan (L-Trp) pyrrole ring and converts L-tryptophan to N-formyl-L-kynurenine. Catalyzes the oxidative cleavage of the indole moiety. Required for synthesis of the siderophore quinolobactin. In Pseudomonas fluorescens, this protein is Tryptophan 2,3-dioxygenase.